The chain runs to 153 residues: Putative pre-16S rRNA nuclease (153 aa).

This sequence belongs to the YqgF nuclease family.

It is found in the cytoplasm. In terms of biological role, could be a nuclease involved in processing of the 5'-end of pre-16S rRNA. This is Putative pre-16S rRNA nuclease from Prochlorococcus marinus (strain MIT 9301).